The sequence spans 272 residues: 4-hydroxy-tetrahydrodipicolinate reductase (272 aa).

An NAD(+)-binding site is contributed by Gly-12–Met-17. Lys-39 provides a ligand contact to NADP(+). NAD(+) is bound by residues Gly-102 to Thr-104 and Ser-126 to Tyr-129. The active-site Proton donor/acceptor is His-159. Residue His-160 coordinates (S)-2,3,4,5-tetrahydrodipicolinate. Lys-163 functions as the Proton donor in the catalytic mechanism. Residue Gly-169–Thr-170 coordinates (S)-2,3,4,5-tetrahydrodipicolinate.

This sequence belongs to the DapB family. Homotetramer.

Its subcellular location is the cytoplasm. The enzyme catalyses (S)-2,3,4,5-tetrahydrodipicolinate + NAD(+) + H2O = (2S,4S)-4-hydroxy-2,3,4,5-tetrahydrodipicolinate + NADH + H(+). The catalysed reaction is (S)-2,3,4,5-tetrahydrodipicolinate + NADP(+) + H2O = (2S,4S)-4-hydroxy-2,3,4,5-tetrahydrodipicolinate + NADPH + H(+). It participates in amino-acid biosynthesis; L-lysine biosynthesis via DAP pathway; (S)-tetrahydrodipicolinate from L-aspartate: step 4/4. Catalyzes the conversion of 4-hydroxy-tetrahydrodipicolinate (HTPA) to tetrahydrodipicolinate. This is 4-hydroxy-tetrahydrodipicolinate reductase from Buchnera aphidicola subsp. Baizongia pistaciae (strain Bp).